The following is a 1266-amino-acid chain: 5-oxoprolinase 1 (1266 aa).

The protein belongs to the oxoprolinase family. In terms of tissue distribution, expressed in roots, stems, leaves, flowers and siliques.

The protein localises to the cytoplasm. The enzyme catalyses 5-oxo-L-proline + ATP + 2 H2O = L-glutamate + ADP + phosphate + H(+). Its function is as follows. Catalyzes the cleavage of 5-oxo-L-proline to form L-glutamate coupled to the hydrolysis of ATP to ADP and inorganic phosphate. Acts in the glutathione degradation pathway. This Arabidopsis thaliana (Mouse-ear cress) protein is 5-oxoprolinase 1.